The sequence spans 407 residues: Elongation factor Tu, chloroplastic (407 aa).

In terms of domain architecture, tr-type G spans 10–212 (KPHVNIGTIG…SVDNYIPAPE (203 aa)). Residues 19–26 (GHVDHGKT) form a G1 region. 19-26 (GHVDHGKT) serves as a coordination point for GTP. Position 26 (threonine 26) interacts with Mg(2+). The tract at residues 59 to 63 (GITIN) is G2. Residues 80-83 (DCPG) form a G3 region. GTP-binding positions include 80 to 84 (DCPGH) and 135 to 138 (NKAD). Positions 135 to 138 (NKAD) are G4. The segment at 173–175 (SAL) is G5.

It belongs to the TRAFAC class translation factor GTPase superfamily. Classic translation factor GTPase family. EF-Tu/EF-1A subfamily.

It is found in the plastid. It localises to the chloroplast. The catalysed reaction is GTP + H2O = GDP + phosphate + H(+). Its function is as follows. GTP hydrolase that promotes the GTP-dependent binding of aminoacyl-tRNA to the A-site of ribosomes during protein biosynthesis. The protein is Elongation factor Tu, chloroplastic (tufA) of Emiliania huxleyi (Coccolithophore).